A 379-amino-acid chain; its full sequence is Carbamoyl phosphate synthase small chain (379 aa).

Residues 1-187 are CPSase; that stretch reads MNFTPALLAL…GSGHAPAPAS (187 aa). Positions 48, 239, and 241 each coordinate L-glutamine. The Glutamine amidotransferase type-1 domain occupies 191 to 378; sequence KVVAYDFGVK…IELMKPQGVR (188 aa). The active-site Nucleophile is Cys267. The L-glutamine site is built by Leu268, Gln271, Asn309, Gly311, and Phe312. Active-site residues include His351 and Glu353.

The protein belongs to the CarA family. In terms of assembly, composed of two chains; the small (or glutamine) chain promotes the hydrolysis of glutamine to ammonia, which is used by the large (or ammonia) chain to synthesize carbamoyl phosphate. Tetramer of heterodimers (alpha,beta)4.

The enzyme catalyses hydrogencarbonate + L-glutamine + 2 ATP + H2O = carbamoyl phosphate + L-glutamate + 2 ADP + phosphate + 2 H(+). It carries out the reaction L-glutamine + H2O = L-glutamate + NH4(+). Its pathway is amino-acid biosynthesis; L-arginine biosynthesis; carbamoyl phosphate from bicarbonate: step 1/1. It functions in the pathway pyrimidine metabolism; UMP biosynthesis via de novo pathway; (S)-dihydroorotate from bicarbonate: step 1/3. Functionally, small subunit of the glutamine-dependent carbamoyl phosphate synthetase (CPSase). CPSase catalyzes the formation of carbamoyl phosphate from the ammonia moiety of glutamine, carbonate, and phosphate donated by ATP, constituting the first step of 2 biosynthetic pathways, one leading to arginine and/or urea and the other to pyrimidine nucleotides. The small subunit (glutamine amidotransferase) binds and cleaves glutamine to supply the large subunit with the substrate ammonia. This is Carbamoyl phosphate synthase small chain from Thioalkalivibrio sulfidiphilus (strain HL-EbGR7).